Here is a 352-residue protein sequence, read N- to C-terminus: Rhodopsin, deep-sea form (352 aa).

The Extracellular portion of the chain corresponds to 1 to 36 (MNGTEGPNFYIPMSNITGVVRSPFEYPQYYLAEPWA). Asn-2 and Asn-15 each carry an N-linked (GlcNAc...) asparagine glycan. A helical transmembrane segment spans residues 37–61 (YTILAAYMFTLILLGFPVNFLTLYV). At 62–73 (TIEHKKLRTPLN) the chain is on the cytoplasmic side. A helical transmembrane segment spans residues 74–98 (YILLNLAVANLFMVFGGFTTTVYTS). The Extracellular portion of the chain corresponds to 99 to 113 (MHGYFVFGETGCNLE). Cys-110 and Cys-187 are disulfide-bonded. Residues 114–133 (GYFATLGGEISLWSLVVLAI) form a helical membrane-spanning segment. At 134-152 (ERWVVVCKPMSNFRFGENH) the chain is on the cytoplasmic side. A helical membrane pass occupies residues 153–176 (AIMGLAFTWIMANSCAMPPLFGWS). Topologically, residues 177-202 (RYIPEGMQCSCGVDYYTLKPEVNNES) are extracellular. An N-linked (GlcNAc...) asparagine glycan is attached at Asn-200. Residues 203–230 (FVIYMFIVHFSVPLTIISFCYGRLVCTV) traverse the membrane as a helical segment. Topologically, residues 231–252 (KEAAAQQQESETTQRAEREVTR) are cytoplasmic. A helical transmembrane segment spans residues 253-276 (MVVIMVIAFLVCWVPYASVAWYIF). The Extracellular segment spans residues 277-284 (THQGSTFG). The chain crosses the membrane as a helical span at residues 285–309 (PVFMTVPSFFAKSSAIYNPLIYICL). An N6-(retinylidene)lysine modification is found at Lys-296. Over 310–352 (NSQFRNCMITTLFCGKNPFQEEEGASTTASKTEASSVSSVSPA) the chain is Cytoplasmic. Residue Cys-323 is the site of S-palmitoyl cysteine attachment. The tract at residues 333–352 (GASTTASKTEASSVSSVSPA) is disordered. Over residues 334 to 352 (ASTTASKTEASSVSSVSPA) the composition is skewed to low complexity.

The protein belongs to the G-protein coupled receptor 1 family. Opsin subfamily. Post-translationally, phosphorylated on some or all of the serine and threonine residues present in the C-terminal region. As to expression, rod shaped photoreceptor cells which mediates vision in dim light.

The protein localises to the membrane. In terms of biological role, visual pigments such as rhodopsin and porphyropsin are light-absorbing molecules that mediate vision. Rhodopsin consists of an apoprotein, opsin, covalently linked to 11-cis-retinal. This receptor is coupled to the activation of phospholipase C. Porphyropsin consists of opsin covalently linked to 11-cis 3,4-didehydroretinal. The chain is Rhodopsin, deep-sea form from Anguilla anguilla (European freshwater eel).